The following is a 156-amino-acid chain: ATP synthase subunit b (156 aa).

The helical transmembrane segment at 7-27 (IFFQMLVFFVLGWFTMKFVWP) threads the bilayer.

This sequence belongs to the ATPase B chain family. F-type ATPases have 2 components, F(1) - the catalytic core - and F(0) - the membrane proton channel. F(1) has five subunits: alpha(3), beta(3), gamma(1), delta(1), epsilon(1). F(0) has three main subunits: a(1), b(2) and c(10-14). The alpha and beta chains form an alternating ring which encloses part of the gamma chain. F(1) is attached to F(0) by a central stalk formed by the gamma and epsilon chains, while a peripheral stalk is formed by the delta and b chains.

Its subcellular location is the cell inner membrane. F(1)F(0) ATP synthase produces ATP from ADP in the presence of a proton or sodium gradient. F-type ATPases consist of two structural domains, F(1) containing the extramembraneous catalytic core and F(0) containing the membrane proton channel, linked together by a central stalk and a peripheral stalk. During catalysis, ATP synthesis in the catalytic domain of F(1) is coupled via a rotary mechanism of the central stalk subunits to proton translocation. In terms of biological role, component of the F(0) channel, it forms part of the peripheral stalk, linking F(1) to F(0). In Bordetella bronchiseptica (strain ATCC BAA-588 / NCTC 13252 / RB50) (Alcaligenes bronchisepticus), this protein is ATP synthase subunit b.